A 206-amino-acid chain; its full sequence is Dephospho-CoA kinase (206 aa).

The region spanning isoleucine 4 to glutamine 204 is the DPCK domain. Glycine 12–threonine 17 lines the ATP pocket.

It belongs to the CoaE family.

It localises to the cytoplasm. The enzyme catalyses 3'-dephospho-CoA + ATP = ADP + CoA + H(+). Its pathway is cofactor biosynthesis; coenzyme A biosynthesis; CoA from (R)-pantothenate: step 5/5. Catalyzes the phosphorylation of the 3'-hydroxyl group of dephosphocoenzyme A to form coenzyme A. The sequence is that of Dephospho-CoA kinase from Pasteurella multocida (strain Pm70).